The following is an 83-amino-acid chain: Conotoxin VnMKLT1-022 (83 aa).

An N-terminal signal peptide occupies residues 1–22; the sequence is MKLMCMMIVAVLFLTAWTFVTA. A propeptide spanning residues 23 to 55 is cleaved from the precursor; the sequence is DDSINGPENRRIWEKLLSKTRDEMKNPEASKLN. Intrachain disulfides connect Cys-59–Cys-74, Cys-66–Cys-78, and Cys-73–Cys-82.

This sequence belongs to the conotoxin O1 superfamily. In terms of tissue distribution, expressed by the venom duct.

The protein localises to the secreted. The sequence is that of Conotoxin VnMKLT1-022 from Conus ventricosus (Mediterranean cone).